The primary structure comprises 245 residues: MFEELRPHLIELRKRLFISVACIVVMFIVCFALRSYILDILKAPLIAVLPEVAKHVNVIEVQEALFTAMKVSFFAAFIFSLPVIFWQFWKFVAPGLYDNEKRLVVPFVSFASIMFAFGACFCYFVVVPLAFKFLINFGLNEDFNPVITIGTYVDFFTKVVVAFGLAFEMPVIAFFFAKIGLIDDSFLKRHFRIAVLVIFVFSAFMTPPDVLSQFLMAGPLCGLYGLSILIVQKVNPAPKDKESDE.

The next 6 helical transmembrane spans lie at 17–37 (FISV…RSYI), 73–93 (FFAA…KFVA), 107–127 (FVSF…FVVV), 159–179 (VVVA…FAKI), 191–207 (FRIA…FMTP), and 210–230 (VLSQ…SILI).

Belongs to the TatC family. In terms of assembly, the Tat system comprises two distinct complexes: a TatABC complex, containing multiple copies of TatA, TatB and TatC subunits, and a separate TatA complex, containing only TatA subunits. Substrates initially bind to the TatABC complex, which probably triggers association of the separate TatA complex to form the active translocon.

It localises to the cell inner membrane. Its function is as follows. Part of the twin-arginine translocation (Tat) system that transports large folded proteins containing a characteristic twin-arginine motif in their signal peptide across membranes. Together with TatB, TatC is part of a receptor directly interacting with Tat signal peptides. This Campylobacter jejuni subsp. jejuni serotype O:2 (strain ATCC 700819 / NCTC 11168) protein is Sec-independent protein translocase protein TatC.